Reading from the N-terminus, the 173-residue chain is Flavodoxin (173 aa).

Residues 2-168 (IGIFFSTSTG…RVAGWVEAVV (167 aa)) enclose the Flavodoxin-like domain.

The protein belongs to the flavodoxin family. It depends on FMN as a cofactor.

Its function is as follows. Low-potential electron donor to a number of redox enzymes. This is Flavodoxin from Chondrus crispus (Carrageen Irish moss).